The chain runs to 144 residues: Large ribosomal subunit protein uL15 (144 aa).

Positions 1 to 58 are disordered; the sequence is MRLNTLSPAAGSKPSKKRVGRGIGSGLGKTGGRGHKGQKSRSGGSVRPGFEGGQMPLK. The span at 21–31 shows a compositional bias: gly residues; the sequence is RGIGSGLGKTG.

It belongs to the universal ribosomal protein uL15 family. Part of the 50S ribosomal subunit.

Functionally, binds to the 23S rRNA. This Vibrio atlanticus (strain LGP32) (Vibrio splendidus (strain Mel32)) protein is Large ribosomal subunit protein uL15.